The primary structure comprises 751 residues: Ecdysteroid-phosphate phosphatase (751 aa).

Residues 16 to 60 (CISKQHLTPLQTLLQMGFPRHRAEKALASTGNRGVQIASDWLLAH) enclose the UBA domain. An SH3 domain is found at 271–336 (ATKQVQKVVY…PVNYTERTAE (66 aa)). Disordered stretches follow at residues 367-394 (GRSISTEPDDRQNTAHPDIIEGSSFEES) and 458-484 (EPPAAQPPRPDDTLSVHSDHSLHPGSL). The span at 466–479 (RPDDTLSVHSDHSL) shows a compositional bias: basic and acidic residues. Positions 490 to 751 (KNRKIYIMRH…RFEWNALSAT (262 aa)) are phosphatase-like. Residue Arg-498 is part of the active site. His-499 functions as the Tele-phosphohistidine intermediate in the catalytic mechanism. The active site involves His-681.

The protein resides in the cytoplasm. Its subcellular location is the cytosol. It localises to the nucleus. It carries out the reaction ecdysone 22-phosphate + H2O = ecdysone + phosphate. It catalyses the reaction 20-hydroxyecdysone 22-phosphate + H2O = 20-hydroxyecdysone + phosphate. The catalysed reaction is 2-deoxyecdysone 22-phosphate + H2O = 2-deoxyecdysone + phosphate. Steroid phosphatase that dephosphorylates ecdysteroids such as ecdysone 22-phosphate (E22P), 3-epi-ecdysone 22-phosphate (E22P) and 3-epi-ecdysone 2-phosphate (E2P). Likely catalyzes the conversion of inactive phosphorylated ecdysteroids into their active forms. Shows high activity towards ecdysone 22-phosphate (E22P), but is also significantly active against 3-epi-ecdysone 22-phosphate (E22P) and 3-epi-ecdysone 2-phosphate (E2P). Also displays acid phosphatase activity towards 4-nitrophenyl phosphate (pNNP) in vitro. Has no activity towards 3-epi-ecdysone 3-phosphate (E3P). This Drosophila melanogaster (Fruit fly) protein is Ecdysteroid-phosphate phosphatase.